A 508-amino-acid chain; its full sequence is Glucose-1-phosphate adenylyltransferase small subunit 1, chloroplastic (508 aa).

A disordered region spans residues 1–27 (MSSIVTSGVINVPRSSSSSKNLSFSSS). Residues 1-59 (MSSIVTSGVINVPRSSSSSKNLSFSSSSQLSGNKILTVSGNGAPRGRCTLKHVFLTPKA) constitute a chloroplast transit peptide. Positions 15-27 (SSSSSKNLSFSSS) are enriched in low complexity.

The protein belongs to the bacterial/plant glucose-1-phosphate adenylyltransferase family. In terms of assembly, heterotetramer. Seeds.

Its subcellular location is the plastid. It localises to the chloroplast. The catalysed reaction is alpha-D-glucose 1-phosphate + ATP + H(+) = ADP-alpha-D-glucose + diphosphate. It participates in glycan biosynthesis; starch biosynthesis. With respect to regulation, activated by 3'phosphoglycerate, inhibited by orthophosphate. Allosteric regulation. In terms of biological role, this protein plays a role in synthesis of starch. It catalyzes the synthesis of the activated glycosyl donor, ADP-glucose from Glc-1-P and ATP. In Vicia faba (Broad bean), this protein is Glucose-1-phosphate adenylyltransferase small subunit 1, chloroplastic (AGPC).